A 438-amino-acid polypeptide reads, in one-letter code: MKIVYDRINNMRGNLITITAEGVSLGELARIDLKDGRNIYASVLRIDGDQVTLQVFQTTRGISTSDQVTFLNRQMQAVYGDTLLGRRLSGTGLPIDGGPQVIGESIDIGSTSFNPVKRIVPRDMVRTNIPMIDVFNCLVKSQKIPIFSVPGEPYNALLMRIANQTDADVVIIGGMGLTFKEYQAFIENAETAGTINKTVMFIHRATDPAVECLLVPDMALACAERFATDGKNVLVLLTDMTAFADAIKEIAITMDQVPSNRGYPGSLYSDLASRYEKAVSIEDSGSITVIGVTTMPGDDVTHPVPDNTGYITEGQFYLHHGKIDPFGSLSRLKQLVIGKVTRDDHGDLANAMIRLYAESKKARERQAMGFKLSKWDEKLLTYSHLFEERMMNLEVNYTLEEALDLGWETLAECFLASEVGIKESVISKYWPEIAQISK.

Belongs to the ATPase alpha/beta chains family.

Its function is as follows. Produces ATP from ADP in the presence of a proton gradient across the membrane. The V-type beta chain is a regulatory subunit. The polypeptide is V-type ATP synthase beta chain (Protochlamydia amoebophila (strain UWE25)).